A 124-amino-acid polypeptide reads, in one-letter code: MTKIKQEIYNKRPTSPHLTIYKPQISSTLSILHRMTGVALFFVVSILVWWLILSKYDNNYLQLARCCIIKICLVAFSYAWCYHLCNGIRHLFWDIGYGFSIRAVNITGWCVVVCSILLTMLLWV.

Residues 1 to 29 lie on the Cytoplasmic side of the membrane; it reads MTKIKQEIYNKRPTSPHLTIYKPQISSTL. The chain crosses the membrane as a helical span at residues 30–55; that stretch reads SILHRMTGVALFFVVSILVWWLILSK. Residues 56–67 are Periplasmic-facing; it reads YDNNYLQLARCC. Residues 68-88 form a helical membrane-spanning segment; that stretch reads IIKICLVAFSYAWCYHLCNGI. Residue His83 participates in heme binding. Residues 89–103 are Cytoplasmic-facing; it reads RHLFWDIGYGFSIRA. A helical transmembrane segment spans residues 104 to 124; that stretch reads VNITGWCVVVCSILLTMLLWV.

The protein belongs to the cytochrome b560 family. In terms of assembly, part of an enzyme complex containing four subunits: a flavoprotein, an iron-sulfur protein, plus two membrane-anchoring proteins, SdhC and SdhD. The complex can form homotrimers. Requires heme as cofactor.

The protein resides in the cell inner membrane. It functions in the pathway carbohydrate metabolism; tricarboxylic acid cycle. Its function is as follows. Membrane-anchoring subunit of succinate dehydrogenase (SDH). In Rickettsia typhi (strain ATCC VR-144 / Wilmington), this protein is Succinate dehydrogenase cytochrome b556 subunit (sdhC).